Here is a 348-residue protein sequence, read N- to C-terminus: Protein RecA (348 aa).

ATP is bound at residue 66 to 73; sequence GPESSGKT.

Belongs to the RecA family.

The protein resides in the cytoplasm. Functionally, can catalyze the hydrolysis of ATP in the presence of single-stranded DNA, the ATP-dependent uptake of single-stranded DNA by duplex DNA, and the ATP-dependent hybridization of homologous single-stranded DNAs. It interacts with LexA causing its activation and leading to its autocatalytic cleavage. The chain is Protein RecA from Legionella pneumophila (strain Paris).